The primary structure comprises 198 residues: Large ribosomal subunit protein bL25 (198 aa).

This sequence belongs to the bacterial ribosomal protein bL25 family. CTC subfamily. As to quaternary structure, part of the 50S ribosomal subunit; part of the 5S rRNA/L5/L18/L25 subcomplex. Contacts the 5S rRNA. Binds to the 5S rRNA independently of L5 and L18.

In terms of biological role, this is one of the proteins that binds to the 5S RNA in the ribosome where it forms part of the central protuberance. This Lysinibacillus sphaericus (strain C3-41) protein is Large ribosomal subunit protein bL25.